A 661-amino-acid polypeptide reads, in one-letter code: ATP-dependent RNA helicase vasa (661 aa).

Acidic residues predominate over residues 1-10 (MSDDWDDEPI). The tract at residues 1 to 186 (MSDDWDDEPI…RRRRNEDDIN (186 aa)) is disordered. S22 carries the post-translational modification Phosphoserine. Position 27 is a phosphothreonine (T27). 2 stretches are compositionally biased toward gly residues: residues 38–52 (DGVG…GYQG) and 60–83 (RIGG…GGFH). Residues 85-95 (GRREGERDFRG) are compositionally biased toward basic and acidic residues. 5 repeat units span residues 93–99 (FRGGEGG), 100–106 (FRGGQGG), 107–113 (SRGGQGG), 114–120 (SRGGQGG), and 121–127 (FRGGEGG). A 5 X 7 AA tandem repeats of [FS]-R-G-G-[EQ]-G-G region spans residues 93–127 (FRGGEGGFRGGQGGSRGGQGGSRGGQGGFRGGEGG). Residues 96–129 (GEGGFRGGQGGSRGGQGGSRGGQGGFRGGEGGFR) show a composition bias toward gly residues. The span at 131–172 (RLYENEDGDERRGRLDREERGGERRGRLDREERGGERGERGD) shows a compositional bias: basic and acidic residues. The B30.2/SPRY domain-binding motif signature appears at 184-188 (DINNN). The tract at residues 184–203 (DINNNNNIVEDVERKREFYI) is required for posterior localization in oocyte. The Q motif signature appears at 245-273 (QHFTSADLRDIIIDNVNKSGYKIPTPIQK). One can recognise a Helicase ATP-binding domain in the interval 276–453 (IPVISSGRDL…GEFLKNYVFV (178 aa)). Residue 289–296 (AQTGSGKT) participates in ATP binding. Positions 399–402 (DEAD) match the DEAD box motif. The Helicase C-terminal domain occupies 477–624 (KRSKLIEILS…TVPDFLRTCG (148 aa)).

This sequence belongs to the DEAD box helicase family. DDX4/VASA subfamily. Interacts with eIF5B and faf. Interacts with gus (via B30.2/SPRY domain) and Fsn (via B30.2/SPRY domain). Interacts with aub, me31B, eIF-4a and TER94. Interacts with piwi; this interaction is RNA independent. Interacts with Dcr-1 and Fmr1; these interactions occur in the polar granules. The cofactor is Mg(2+). Ubiquitinated during oogenesis. Deubiquitinated by faf, which protects this protein from proteasome-mediated degradation. As to expression, abundantly expressed in the female germline. Gus and faf are required for vas expression in the posterior pole of the oocyte.

The protein localises to the cytoplasm. Its subcellular location is the perinuclear region. It is found in the cytoplasmic ribonucleoprotein granule. It catalyses the reaction ATP + H2O = ADP + phosphate + H(+). Involved in translational control mechanisms operating in early stages of oogenesis. Required maternally in many stages of oogenesis, including cystocyte differentiation, oocyte differentiation, and specification of anterior-posterior polarity in the developing cysts. Essential for the formation and/or structural integrity of perinuclear nuage particles during germ cell formation. Required for gus, Fsn and aub accumulation at the posterior pole of the embryo. Required for the localization of vas to the perinuclear region of nurse cells. May have a role in production of piwi-interacting RNA (piRNA). The sequence is that of ATP-dependent RNA helicase vasa from Drosophila melanogaster (Fruit fly).